The following is a 1754-amino-acid chain: Collagen alpha-1(XVIII) chain (1754 aa).

An N-terminal signal peptide occupies residues 1–23 (MAPYPCGCHILLLLFCCLAAARA). The interval 42–104 (ATTIPEPQGP…TSAESPDAPE (63 aa)) is disordered. Residues 57–73 (TADTTTHVTPRNGSTEP) are compositionally biased toward polar residues. N-linked (GlcNAc...) asparagine glycosylation is found at N68, N129, and N164. Residues 152–256 (LALAGPSSTP…APSQQLQRPD (105 aa)) are disordered. Polar residues predominate over residues 157–169 (PSSTPQENGTTLW). Low complexity predominate over residues 215 to 253 (SGRASLSSLLGGAPPWGSLQDPDSQGLSPAAAAPSQQLQ). One can recognise an FZ domain in the interval 329-446 (APAGRCLPLP…TQEDGYCVLI (118 aa)). Intrachain disulfides connect C334–C397, C344–C390, C381–C419, C408–C443, and C412–C432. The 189-residue stretch at 456 to 644 (EVGLLQLLGD…IAELKVRRDP (189 aa)) folds into the Laminin G-like domain. A nonhelical region 1 (NC1) region spans residues 645 to 751 (QVSPMHCLDE…RTPGGRVKEG (107 aa)). The disordered stretch occupies residues 645 to 1443 (QVSPMHCLDE…GPPGTMGASS (799 aa)). A compositionally biased stretch (basic and acidic residues) spans 672–681 (DARELLREET). Residue T696 is modified to Phosphothreonine. Residues 717–738 (QTTVASLGAQTLPGSDSVSTWD) show a composition bias toward polar residues. The triple-helical region 1 (COL1) stretch occupies residues 752 to 785 (GLKGQKGEPGVPGPPGRAGPPGSPCLPGPPGLPC). Positions 762 to 789 (VPGPPGRAGPPGSPCLPGPPGLPCPVSP) are enriched in pro residues. Positions 786–795 (PVSPLGPAGP) are nonhelical region 2 (NC2). Residues 796–875 (ALQTVPGPQG…QGPPGPPGPS (80 aa)) are triple-helical region 2 (COL2). A compositionally biased stretch (basic and acidic residues) spans 815–831 (TPGRDGEPGDPGEDGKP). Low complexity predominate over residues 833–846 (DTGPQGFPGTPGDV). Residues 862 to 874 (PPGPQGPPGPPGP) show a composition bias toward pro residues. The interval 876–899 (FRHDKLTFIDMEGSGFGGDLEALR) is nonhelical region 3 (NC3). O-linked (Xyl...) (chondroitin sulfate) serine glycosylation is present at S889. A triple-helical region 3 (COL3) region spans residues 900-1021 (GPRGFPGPPG…PGPPGPPGPG (122 aa)). Over residues 904 to 914 (FPGPPGPPGVP) the composition is skewed to pro residues. N-linked (GlcNAc...) asparagine glycosylation occurs at N926. Low complexity predominate over residues 930–942 (VPGPAGLPGVPGR). Over residues 946-961 (PGFPGLPGPPGPPGRE) the composition is skewed to pro residues. The segment covering 976-1003 (AGAPGHKGSKGAPGPAGARGESGLAGAP) has biased composition (low complexity). A compositionally biased stretch (pro residues) spans 1005–1021 (PAGPPGPPGPPGPPGPG). Residues 1022 to 1044 (LPAGFDDMEGSGGPFWSTARSAD) are nonhelical region 4 (NC4). A triple-helical region 4 (COL4) region spans residues 1045–1127 (GPQGPPGLPG…PGPPGPPGPV (83 aa)). The span at 1053 to 1065 (PGLKGDPGVPGLP) shows a compositional bias: low complexity. The span at 1095 to 1109 (KGDRGSRGEKGDPGK) shows a compositional bias: basic and acidic residues. The span at 1117–1126 (LPGPPGPPGP) shows a compositional bias: pro residues. A nonhelical region 5 (NC5) region spans residues 1128–1141 (VYVSEQDGSVLSVP). Low complexity predominate over residues 1141–1153 (PGPEGRPGFAGFP). The interval 1142–1183 (GPEGRPGFAGFPGPAGPKGNLGSKGERGSPGPKGEKGEPGSI) is triple-helical region 5 (COL5). The nonhelical region 6 (NC6) stretch occupies residues 1184 to 1196 (FSPDGGALGPAQK). Residues 1197 to 1269 (GAKGEPGFRG…PGPPGPPGTP (73 aa)) form a triple-helical region 6 (COL6) region. The span at 1254 to 1268 (PGPPGPPGPPGPPGT) shows a compositional bias: pro residues. Residues 1270-1279 (VYDSNVFAES) form a nonhelical region 7 (NC7) region. Positions 1280 to 1312 (SRPGPPGLPGNQGPPGPKGAKGEVGPPGPPGQF) are triple-helical region 7 (COL7). Pro residues predominate over residues 1282–1296 (PGPPGLPGNQGPPGP). The nonhelical region 8 (NC8) stretch occupies residues 1313-1324 (PFDFLQLEAEMK). Over residues 1321-1341 (AEMKGEKGDRGDAGQKGERGE) the composition is skewed to basic and acidic residues. The segment at 1325–1346 (GEKGDRGDAGQKGERGEPGGGG) is triple-helical region 8 (COL8). A Cell attachment site motif is present at residues 1330 to 1332 (RGD). Residues 1347–1353 (FFGSSLP) form a nonhelical region 9 (NC9) region. Pro residues-rich tracts occupy residues 1353 to 1365 (PGPP…PGPR), 1401 to 1414 (PPGP…PSFP), and 1424 to 1436 (PGPP…PGPP). The interval 1354–1411 (GPPGPPGPPGPRGYPGIPGPKGESIRGQPGPPGPQGPPGIGYEGRQGPPGPPGPPGPP) is triple-helical region 9 (COL9). The tract at residues 1412 to 1424 (SFPGPHRQTISVP) is nonhelical region 10 (NC10). The tract at residues 1425–1442 (GPPGPPGPPGPPGTMGAS) is triple-helical region 10 (COL10). A nonhelical region 11 (NC11) region spans residues 1443-1754 (SGVRLWATRQ…IENSFMTASK (312 aa)). A non-collagenous domain 1 association domain region spans residues 1456 to 1501 (GQVHEVPEGWLIFVAEQEELYVRVQNGFRKVQLEARTPLPRGTDNE). The tract at residues 1502 to 1571 (VAALQPPVVQ…RPARPTSPPA (70 aa)) is non-collagenous domain 1 hinge region. The disordered stretch occupies residues 1511–1556 (QLHDSNPYPRREHPHPTARPWRADDILASPPRLPEPQPYPGAPHHS). Basic and acidic residues predominate over residues 1519–1535 (PRREHPHPTARPWRADD). The segment covering 1541–1551 (PRLPEPQPYPG) has biased composition (pro residues). The O-linked (GalNAc...) threonine glycan is linked to T1567. Zn(2+)-binding residues include H1572, H1574, H1582, and D1647. Cystine bridges form between C1604–C1744 and C1706–C1736.

This sequence belongs to the multiplexin collagen family. In terms of assembly, forms homotrimers. Recombinant non-collagenous domain 1 has stronger affinity to NID1, HSPG2 and laminin-1:NID1 complex and lower affinity to FBLN1 and FBLN2 than endostatin. As to quaternary structure, monomeric. Interacts with KDR/VEGFR2. Interacts with the ITGA5:ITGB1 complex. Interacts with NID1, HSPG2, laminin-1:NID1 complex, FBLN1 and FBLN2. Post-translationally, prolines at the third position of the tripeptide repeating unit (G-X-Y) of the triple-helical regions are hydroxylated. In terms of processing, circulating endostatins are found as sialoglycoprotein and asialoglycoprotein structures. Undergoes proteolytic processing by CTSL/cathepsin-L and elastase-like proteases to generate both non-collagenous domain 1 trimers and endostatin monomers. In tissue extracts (brain, skeletal muscle, heart, kidney, testis and liver) predominantly bands of approximately 38 kDa are detected; recombinant non-collagenous domain 1 shows similar mobility. In vitro, several proteolytic cleavage sites in the non-collagenous domain 1 hinge region generating different endostatin-like peptides are reported. As to expression, detected in placenta (at protein level). Present in multiple organs with highest levels in liver, lung and kidney.

It localises to the secreted. The protein resides in the extracellular space. The protein localises to the extracellular matrix. Its subcellular location is the basement membrane. In terms of biological role, probably plays a major role in determining the retinal structure as well as in the closure of the neural tube. Its function is as follows. May regulate extracellular matrix-dependent motility and morphogenesis of endothelial and non-endothelial cells; the function requires homotrimerization and implicates MAPK signaling. Potently inhibits endothelial cell proliferation and angiogenesis. May inhibit angiogenesis by binding to the heparan sulfate proteoglycans involved in growth factor signaling. Inhibits VEGFA-induced endothelial cell proliferation and migration. Seems to inhibit VEGFA-mediated signaling by blocking the interaction of VEGFA to its receptor KDR/VEGFR2. Modulates endothelial cell migration in an integrin-dependent manner implicating integrin ITGA5:ITGB1 and to a lesser extent ITGAV:ITGB3 and ITGAV:ITGB5. May negatively regulate the activity of homotrimeric non-collagenous domain 1. The polypeptide is Collagen alpha-1(XVIII) chain (Homo sapiens (Human)).